The primary structure comprises 132 residues: Small ribosomal subunit protein uS8 (132 aa).

This sequence belongs to the universal ribosomal protein uS8 family. As to quaternary structure, part of the 30S ribosomal subunit. Contacts proteins S5 and S12.

In terms of biological role, one of the primary rRNA binding proteins, it binds directly to 16S rRNA central domain where it helps coordinate assembly of the platform of the 30S subunit. This Beijerinckia indica subsp. indica (strain ATCC 9039 / DSM 1715 / NCIMB 8712) protein is Small ribosomal subunit protein uS8.